The sequence spans 662 residues: Glycogen debranching enzyme (662 aa).

D338 serves as the catalytic Nucleophile. E373 functions as the Proton donor in the catalytic mechanism.

It belongs to the glycosyl hydrolase 13 family.

The catalysed reaction is Hydrolysis of (1-&gt;6)-alpha-D-glucosidic linkages to branches with degrees of polymerization of three or four glucose residues in limit dextrin.. Its pathway is glycan degradation; glycogen degradation. In terms of biological role, removes maltotriose and maltotetraose chains that are attached by 1,6-alpha-linkage to the limit dextrin main chain, generating a debranched limit dextrin. The chain is Glycogen debranching enzyme from Yersinia pseudotuberculosis serotype IB (strain PB1/+).